We begin with the raw amino-acid sequence, 348 residues long: Erythronate-4-phosphate dehydrogenase (348 aa).

Substrate contacts are provided by Thr-46 and Thr-67. Asp-147 is an NAD(+) binding site. Arg-209 is an active-site residue. NAD(+) is bound at residue Asp-233. Residue Glu-238 is part of the active site. The active-site Proton donor is the His-255. Gly-258 is an NAD(+) binding site. Tyr-259 contributes to the substrate binding site.

It belongs to the D-isomer specific 2-hydroxyacid dehydrogenase family. PdxB subfamily. In terms of assembly, homodimer.

Its subcellular location is the cytoplasm. It carries out the reaction 4-phospho-D-erythronate + NAD(+) = (R)-3-hydroxy-2-oxo-4-phosphooxybutanoate + NADH + H(+). It functions in the pathway cofactor biosynthesis; pyridoxine 5'-phosphate biosynthesis; pyridoxine 5'-phosphate from D-erythrose 4-phosphate: step 2/5. In terms of biological role, catalyzes the oxidation of erythronate-4-phosphate to 3-hydroxy-2-oxo-4-phosphonooxybutanoate. This Bacteroides thetaiotaomicron (strain ATCC 29148 / DSM 2079 / JCM 5827 / CCUG 10774 / NCTC 10582 / VPI-5482 / E50) protein is Erythronate-4-phosphate dehydrogenase.